The sequence spans 855 residues: Cytosolic phospholipase A2 zeta (855 aa).

Positions 27 to 145 (EKSEPQWKHR…QLGQPCTKNF (119 aa)) constitute a C2 domain. Ca(2+) contacts are provided by D60, D66, D116, D118, and D123. The PLA2c domain occupies 304–855 (MSSSGDLDLR…RRQAGGRVGG (552 aa)). S393 acts as the Nucleophile in catalysis. Residue D685 is the Proton acceptor of the active site.

The cofactor is Ca(2+). As to expression, strongly expressed in thyroid, expressed at intermediate level in stomach and at very low level in large intestine and prostate.

Its subcellular location is the cytoplasm. It is found in the cytosol. The protein localises to the cell membrane. It localises to the mitochondrion. The catalysed reaction is a 1,2-diacyl-sn-glycero-3-phosphocholine + H2O = a 1-acyl-sn-glycero-3-phosphocholine + a fatty acid + H(+). It catalyses the reaction a 1-O-alkyl-2-acyl-sn-glycero-3-phosphocholine + H2O = a 1-O-alkyl-sn-glycero-3-phosphocholine + a fatty acid + H(+). The enzyme catalyses 1-hexadecanoyl-2-(9Z-octadecenoyl)-sn-glycero-3-phosphocholine + H2O = 2-(9Z-octadecenoyl)-sn-glycero-3-phosphocholine + hexadecanoate + H(+). It carries out the reaction 1-hexadecanoyl-2-(9Z,12Z-octadecadienoyl)-sn-glycero-3-phosphocholine + H2O = (9Z,12Z)-octadecadienoate + 1-hexadecanoyl-sn-glycero-3-phosphocholine + H(+). The catalysed reaction is 1-hexadecanoyl-2-(5Z,8Z,11Z,14Z-eicosatetraenoyl)-sn-glycero-3-phosphocholine + H2O = 1-hexadecanoyl-sn-glycero-3-phosphocholine + (5Z,8Z,11Z,14Z)-eicosatetraenoate + H(+). It catalyses the reaction 1-hexadecanoyl-2-(9Z,12Z-octadecadienoyl)-sn-glycero-3-phosphoethanolamine + H2O = 1-hexadecanoyl-sn-glycero-3-phosphoethanolamine + (9Z,12Z)-octadecadienoate + H(+). The enzyme catalyses 1-hexadecanoyl-2-(5Z,8Z,11Z,14Z-eicosatetraenoyl)-sn-glycero-3-phosphoethanolamine + H2O = 1-hexadecanoyl-sn-glycero-3-phosphoethanolamine + (5Z,8Z,11Z,14Z)-eicosatetraenoate + H(+). It carries out the reaction 1-(5Z,8Z,11Z,14Z-eicosatetraenoyl)-2-O-hexadecyl-sn-glycero-3-phosphocholine + H2O = 2-O-hexadecyl-sn-glycero-3-phosphocholine + (5Z,8Z,11Z,14Z)-eicosatetraenoate + H(+). The catalysed reaction is 1-O-hexadecyl-2-(5Z,8Z,11Z,14Z)-eicosatetraenoyl-sn-glycero-3-phosphocholine + H2O = 1-O-hexadecyl-sn-glycero-3-phosphocholine + (5Z,8Z,11Z,14Z)-eicosatetraenoate + H(+). It catalyses the reaction 1-hexadecanoyl-sn-glycero-3-phosphocholine + H2O = sn-glycerol 3-phosphocholine + hexadecanoate + H(+). With respect to regulation, stimulated by cytosolic Ca(2+). Its function is as follows. Has calcium-dependent phospholipase and lysophospholipase activities with a potential role in membrane lipid remodeling and biosynthesis of lipid mediators. Preferentially hydrolyzes the ester bond of the fatty acyl group attached at sn-2 position of phospholipids (phospholipase A2 activity). Selectively hydrolyzes sn-2 arachidonoyl group from membrane phospholipids, providing the precursor for eicosanoid biosynthesis. In myocardial mitochondria, plays a major role in arachidonate release that is metabolically channeled to the formation of cardioprotective eicosanoids, epoxyeicosatrienoates (EETs). This Mus musculus (Mouse) protein is Cytosolic phospholipase A2 zeta (Pla2g4f).